Reading from the N-terminus, the 355-residue chain is Probable L-aspartate decarboxylase (355 aa).

Position 210 is an N6-(pyridoxal phosphate)lysine (Lys-210).

This sequence belongs to the group II decarboxylase family. MfnA subfamily. Pyridoxal 5'-phosphate is required as a cofactor.

The enzyme catalyses L-aspartate + H(+) = beta-alanine + CO2. It participates in cofactor biosynthesis; coenzyme A biosynthesis. Its function is as follows. Catalyzes the decarboxylation of L-aspartate to produce beta-alanine. The protein is Probable L-aspartate decarboxylase of Halobacterium salinarum (strain ATCC 29341 / DSM 671 / R1).